A 720-amino-acid polypeptide reads, in one-letter code: 1,4-alpha-glucan branching enzyme GlgB (720 aa).

The active-site Nucleophile is the D400. Catalysis depends on E453, which acts as the Proton donor.

It belongs to the glycosyl hydrolase 13 family. GlgB subfamily. As to quaternary structure, monomer.

It carries out the reaction Transfers a segment of a (1-&gt;4)-alpha-D-glucan chain to a primary hydroxy group in a similar glucan chain.. It participates in glycan biosynthesis; glycogen biosynthesis. Catalyzes the formation of the alpha-1,6-glucosidic linkages in glycogen by scission of a 1,4-alpha-linked oligosaccharide from growing alpha-1,4-glucan chains and the subsequent attachment of the oligosaccharide to the alpha-1,6 position. The polypeptide is 1,4-alpha-glucan branching enzyme GlgB (Chlamydia pneumoniae (Chlamydophila pneumoniae)).